Reading from the N-terminus, the 349-residue chain is Probable transporter vicT (349 aa).

Positions 25 to 153 (IAAALLHALA…TALAGVVLVL (129 aa)) constitute an EamA domain. Transmembrane regions (helical) follow at residues 49–69 (PFTVLQIRLFITVLGCTAYLW), 89–109 (AAGGVFGACGFYLSISYLSLS), 111–131 (ATVLNFIAPLGAIMLTTYWEG), 133–153 (TFAFLDLIACITALAGVVLVL), 179–199 (LKGVVSGITGVAGGIVAFSAM), 215–235 (FGVSICIVTTAFSTIMPEVVW), 244–264 (LLAIIGILGLVMEYLLTAGLG), 269–289 (RVTIMIYSQVLWALFLDWAIW), and 294–314 (NVLTVLGSMVVVASLAVPYLF).

The protein belongs to the TPT transporter family. SLC35D subfamily.

It is found in the membrane. In terms of biological role, probable transporter; part of the gene cluster that mediates the biosynthesis of the secondary metabolite victorin, the molecular basis for Victoria blight of oats. This chain is Probable transporter vicT, found in Bipolaris victoriae (strain FI3) (Victoria blight of oats agent).